A 238-amino-acid polypeptide reads, in one-letter code: Pyruvate formate-lyase-activating enzyme (238 aa).

The region spanning 15–236 (VDGPGIRTVV…KKLEKYLKEL (222 aa)) is the Radical SAM core domain. [4Fe-4S] cluster is bound by residues cysteine 29, cysteine 33, and cysteine 36. Residues 35–37 (YCH), glycine 78, 126–128 (DIK), and histidine 199 contribute to the S-adenosyl-L-methionine site.

The protein belongs to the organic radical-activating enzymes family. It depends on [4Fe-4S] cluster as a cofactor.

The protein localises to the cytoplasm. The catalysed reaction is glycyl-[formate C-acetyltransferase] + reduced [flavodoxin] + S-adenosyl-L-methionine = glycin-2-yl radical-[formate C-acetyltransferase] + semiquinone [flavodoxin] + 5'-deoxyadenosine + L-methionine + H(+). Functionally, activation of pyruvate formate-lyase under anaerobic conditions by generation of an organic free radical, using S-adenosylmethionine and reduced flavodoxin as cosubstrates to produce 5'-deoxy-adenosine. This chain is Pyruvate formate-lyase-activating enzyme (act), found in Clostridium pasteurianum.